Consider the following 200-residue polypeptide: MPVLPRDFYDRPTLEVARDLLGKTLVRQLPAGRVALRIVETEAYIGENDKACHASKGMTARNRVMFGQPGHAYVYLIYGMYNCLNLVTEKDGYPAAVLIRAGEPIEGEEIMSSLRPKARKHHEIASGPGKLCGAMSITRALNGADVCASGELYVEDGPAVKKIVACPRIGVDYAGEDALRPWRFYDKNSPCVSKRAPGDI.

It belongs to the DNA glycosylase MPG family.

The protein is Putative 3-methyladenine DNA glycosylase of Methanocella arvoryzae (strain DSM 22066 / NBRC 105507 / MRE50).